Here is an 86-residue protein sequence, read N- to C-terminus: UPF0335 protein mll3968 (86 aa).

This sequence belongs to the UPF0335 family.

The protein is UPF0335 protein mll3968 of Mesorhizobium japonicum (strain LMG 29417 / CECT 9101 / MAFF 303099) (Mesorhizobium loti (strain MAFF 303099)).